The sequence spans 1396 residues: DNA-directed RNA polymerase subunit beta' (1396 aa).

Residues Cys-72, Cys-74, Cys-87, and Cys-90 each coordinate Zn(2+). Positions 463, 465, and 467 each coordinate Mg(2+). Residues Cys-814, Cys-889, Cys-896, and Cys-899 each coordinate Zn(2+).

The protein belongs to the RNA polymerase beta' chain family. The RNAP catalytic core consists of 2 alpha, 1 beta, 1 beta' and 1 omega subunit. When a sigma factor is associated with the core the holoenzyme is formed, which can initiate transcription. Requires Mg(2+) as cofactor. It depends on Zn(2+) as a cofactor.

It catalyses the reaction RNA(n) + a ribonucleoside 5'-triphosphate = RNA(n+1) + diphosphate. In terms of biological role, DNA-dependent RNA polymerase catalyzes the transcription of DNA into RNA using the four ribonucleoside triphosphates as substrates. The polypeptide is DNA-directed RNA polymerase subunit beta' (Chlamydia trachomatis serovar L2b (strain UCH-1/proctitis)).